The primary structure comprises 94 residues: Long neurotoxin LNTX8 (94 aa).

Residues 1-21 form the signal peptide; the sequence is MKTLLLTLVVVTIMCLDLGYT. 5 disulfide bridges follow: Cys24/Cys43, Cys36/Cys64, Cys49/Cys53, Cys68/Cys79, and Cys80/Cys85.

This sequence belongs to the three-finger toxin family. Long-chain subfamily. Type II alpha-neurotoxin sub-subfamily. As to expression, expressed by the venom gland.

The protein resides in the secreted. Functionally, binds with high affinity to muscular (alpha-1/CHRNA1) and neuronal (alpha-7/CHRNA7) nicotinic acetylcholine receptor (nAChR) and inhibits acetylcholine from binding to the receptor, thereby impairing neuromuscular and neuronal transmission. The protein is Long neurotoxin LNTX8 of Ophiophagus hannah (King cobra).